Consider the following 408-residue polypeptide: Argininosuccinate synthase (408 aa).

8 to 16 serves as a coordination point for ATP; sequence AYSGGLDTT. Residue tyrosine 86 coordinates L-citrulline. Position 116 (glycine 116) interacts with ATP. Threonine 118, asparagine 122, and aspartate 123 together coordinate L-aspartate. Asparagine 122 contributes to the L-citrulline binding site. The L-citrulline site is built by arginine 126, serine 177, serine 186, glutamate 263, and tyrosine 275.

It belongs to the argininosuccinate synthase family. Type 1 subfamily. As to quaternary structure, homotetramer.

It is found in the cytoplasm. The enzyme catalyses L-citrulline + L-aspartate + ATP = 2-(N(omega)-L-arginino)succinate + AMP + diphosphate + H(+). The protein operates within amino-acid biosynthesis; L-arginine biosynthesis; L-arginine from L-ornithine and carbamoyl phosphate: step 2/3. The protein is Argininosuccinate synthase of Agathobacter rectalis (strain ATCC 33656 / DSM 3377 / JCM 17463 / KCTC 5835 / VPI 0990) (Eubacterium rectale).